A 173-amino-acid chain; its full sequence is Small ribosomal subunit protein uS11m (173 aa).

This sequence belongs to the universal ribosomal protein uS11 family.

It localises to the mitochondrion. The protein is Small ribosomal subunit protein uS11m (RPS11) of Acanthamoeba castellanii (Amoeba).